A 516-amino-acid polypeptide reads, in one-letter code: 1-pyrroline-5-carboxylate dehydrogenase (516 aa).

Residues E287 and C321 contribute to the active site.

The protein belongs to the aldehyde dehydrogenase family. RocA subfamily.

The catalysed reaction is L-glutamate 5-semialdehyde + NAD(+) + H2O = L-glutamate + NADH + 2 H(+). The protein operates within amino-acid degradation; L-proline degradation into L-glutamate; L-glutamate from L-proline: step 2/2. The sequence is that of 1-pyrroline-5-carboxylate dehydrogenase from Bacillus licheniformis (strain ATCC 14580 / DSM 13 / JCM 2505 / CCUG 7422 / NBRC 12200 / NCIMB 9375 / NCTC 10341 / NRRL NRS-1264 / Gibson 46).